A 582-amino-acid chain; its full sequence is Phosphoglucomutase, cytoplasmic (582 aa).

Residues arginine 25 and serine 124 each coordinate alpha-D-glucose 1,6-bisphosphate. Residue serine 124 is the Phosphoserine intermediate of the active site. Residues serine 124, aspartate 300, aspartate 302, and aspartate 304 each contribute to the Mg(2+) site. Serine 124 is subject to Phosphoserine. Alpha-D-glucose 1,6-bisphosphate contacts are provided by aspartate 304, arginine 305, threonine 368, glutamate 387, serine 389, and lysine 400.

This sequence belongs to the phosphohexose mutase family. In terms of assembly, monomer. Mg(2+) serves as cofactor.

It localises to the cytoplasm. It carries out the reaction alpha-D-glucose 1-phosphate = alpha-D-glucose 6-phosphate. The catalysed reaction is O-phospho-L-seryl-[protein] + alpha-D-glucose 1-phosphate = alpha-D-glucose 1,6-bisphosphate + L-seryl-[protein]. It catalyses the reaction alpha-D-glucose 1,6-bisphosphate + L-seryl-[protein] = O-phospho-L-seryl-[protein] + alpha-D-glucose 6-phosphate. Functionally, catalyzes the reversible isomerization of alpha-D-glucose 1-phosphate to alpha-D-glucose 6-phosphate. The mechanism proceeds via the intermediate compound alpha-D-glucose 1,6-bisphosphate. This enzyme participates in both the breakdown and synthesis of glucose. The protein is Phosphoglucomutase, cytoplasmic (PGM1) of Pisum sativum (Garden pea).